Here is a 279-residue protein sequence, read N- to C-terminus: Undecaprenyl-diphosphatase (279 aa).

The next 8 helical transmembrane spans lie at L2–L22, A44–I64, W85–L105, F113–I133, V163–L183, T188–L208, L225–L245, and F255–F275.

This sequence belongs to the UppP family.

It localises to the cell membrane. The catalysed reaction is di-trans,octa-cis-undecaprenyl diphosphate + H2O = di-trans,octa-cis-undecaprenyl phosphate + phosphate + H(+). Functionally, catalyzes the dephosphorylation of undecaprenyl diphosphate (UPP). Confers resistance to bacitracin. This is Undecaprenyl-diphosphatase from Streptococcus equi subsp. zooepidemicus (strain H70).